A 454-amino-acid polypeptide reads, in one-letter code: Uridine kinase (454 aa).

Residue 28-35 coordinates ATP; that stretch reads GPSGSGKT.

It belongs to the uridine kinase family.

It localises to the cytoplasm. The protein localises to the nucleus. It catalyses the reaction uridine + ATP = UMP + ADP + H(+). The catalysed reaction is cytidine + ATP = CMP + ADP + H(+). Its pathway is pyrimidine metabolism; CTP biosynthesis via salvage pathway; CTP from cytidine: step 1/3. It participates in pyrimidine metabolism; UMP biosynthesis via salvage pathway; UMP from uridine: step 1/1. Catalyzes the conversion of uridine into UMP and cytidine into CMP in the pyrimidine salvage pathway. In Schizosaccharomyces pombe (strain 972 / ATCC 24843) (Fission yeast), this protein is Uridine kinase (urk1).